Consider the following 610-residue polypeptide: MAPKDSQVSASNEMTGNPPSSVQGRSRNGCITCRIRRVKCDEERPHCRRCQSTGRKCDGYTPLTGQQPKQQPPQQAAKAGSSELRIIQHTPQVTQPTQLCMFPGVDTLLTEDEYRALEFFNVQTVSCFGPRAGGWLLNAACQDSAIRRAAMALGTMHRVVLYHSRTPPHDRRRGMQLALQQYNSAIRQGLKLFAGSNDSSADGILSMCVLFFCLDSLQGHFRSALRHVGSGLRILAQRQLRGQRAENTLLPPDVIQSLFAALEAQMLEIDGQSPLLDENGLPVRGAGRPAPLWTLEEAQDTFRSIYNDFLRLLSFSARLEEPVDELEMVQIVEQVMARKQQVQTDLDAWSLEFDHFLAHIFHWGNQASQQSVRMLQLWRTMLTMVLHMGWPPQDTAWGSHLSELNIILDLAEQIIVMSPPLELESSAGSTFSLQGHSRAGSPSGSRSRSMSTSSSASRDDSPTTTTTTTTTPTPRLKKETDPQSTYTPILPRPFHSSPSRFTLALGILPALWTIATQCRDSSVRYRAIDLIGRSKRREGVWDSDLHFRLALQLARHEEQAAGLDAGAEYTHARIPPEARVTLNGRFDEGRKAKISYIRENVRVGEEIFHW.

Residues 1–26 (MAPKDSQVSASNEMTGNPPSSVQGRS) are compositionally biased toward polar residues. The interval 1-27 (MAPKDSQVSASNEMTGNPPSSVQGRSR) is disordered. Positions 30–57 (CITCRIRRVKCDEERPHCRRCQSTGRKC) form a DNA-binding region, zn(2)-C6 fungal-type. Disordered regions lie at residues 61–81 (TPLT…KAGS) and 427–493 (AGST…LPRP). Composition is skewed to low complexity over residues 66 to 79 (QQPK…AAKA) and 437 to 474 (SRAG…TPTP).

The protein localises to the nucleus. Its function is as follows. Transcription factor that positively regulates the cluster that mediate the production of aspercryptins, linear lipopeptides built from six amino acids including 2 highly unusual and nonproteogenic amino acids, 2-amino-octanoic acid (2aoa) and 2-amino-dodecanol (2adol). This is Aspercryptin biosynthesis cluster-specific transcription regulator atnN from Emericella nidulans (strain FGSC A4 / ATCC 38163 / CBS 112.46 / NRRL 194 / M139) (Aspergillus nidulans).